The sequence spans 387 residues: Probable tRNA sulfurtransferase (387 aa).

Residues 67-167 form the THUMP domain; that stretch reads SLLKNLFTRL…KEHFLIISES (101 aa). Residues 185–186, 210–211, arginine 269, glycine 287, and glutamine 296 each bind ATP; these read LL and TF.

It belongs to the ThiI family.

The protein localises to the cytoplasm. The catalysed reaction is [ThiI sulfur-carrier protein]-S-sulfanyl-L-cysteine + a uridine in tRNA + 2 reduced [2Fe-2S]-[ferredoxin] + ATP + H(+) = [ThiI sulfur-carrier protein]-L-cysteine + a 4-thiouridine in tRNA + 2 oxidized [2Fe-2S]-[ferredoxin] + AMP + diphosphate. It carries out the reaction [ThiS sulfur-carrier protein]-C-terminal Gly-Gly-AMP + S-sulfanyl-L-cysteinyl-[cysteine desulfurase] + AH2 = [ThiS sulfur-carrier protein]-C-terminal-Gly-aminoethanethioate + L-cysteinyl-[cysteine desulfurase] + A + AMP + 2 H(+). It functions in the pathway cofactor biosynthesis; thiamine diphosphate biosynthesis. Functionally, catalyzes the ATP-dependent transfer of a sulfur to tRNA to produce 4-thiouridine in position 8 of tRNAs, which functions as a near-UV photosensor. Also catalyzes the transfer of sulfur to the sulfur carrier protein ThiS, forming ThiS-thiocarboxylate. This is a step in the synthesis of thiazole, in the thiamine biosynthesis pathway. The sulfur is donated as persulfide by IscS. This is Probable tRNA sulfurtransferase from Mycoplasma pneumoniae (strain ATCC 29342 / M129 / Subtype 1) (Mycoplasmoides pneumoniae).